Reading from the N-terminus, the 370-residue chain is Flagellar P-ring protein (370 aa).

Residues 1 to 27 (MPARPIPVPLLALALAAALAVPSPAAA) form the signal peptide.

Belongs to the FlgI family. In terms of assembly, the basal body constitutes a major portion of the flagellar organelle and consists of four rings (L,P,S, and M) mounted on a central rod.

The protein resides in the periplasm. The protein localises to the bacterial flagellum basal body. Its function is as follows. Assembles around the rod to form the L-ring and probably protects the motor/basal body from shearing forces during rotation. In Anaeromyxobacter sp. (strain K), this protein is Flagellar P-ring protein.